Reading from the N-terminus, the 476-residue chain is CDK5 and ABL1 enzyme substrate 2 (476 aa).

Residues 1-119 (MAAAAAGGAP…GLGLDGQRQR (119 aa)) form a disordered region. Over residues 30-40 (PRRRGDSRRRQ) the composition is skewed to basic residues. The segment covering 65 to 96 (PAPPPPPPTEAREAPAPPPAPPGGLPGLPARP) has biased composition (pro residues). Phosphoserine is present on residues Ser128 and Ser206. Residues 256–295 (DSHGLLPQPRPSIPRAPPGSRHKPVPTKSTPAGTELGSDG) form a disordered region. A compositionally biased stretch (pro residues) spans 263–272 (QPRPSIPRAP).

The protein belongs to the cyclin family. Binds to CDK3, CDK5 and ABL1. The C-terminal cyclin-box-like region binds to CDK5. In terms of tissue distribution, widely expressed.

Unknown. Probably involved in G1-S cell cycle transition. The protein is CDK5 and ABL1 enzyme substrate 2 (Cables2) of Mus musculus (Mouse).